Consider the following 236-residue polypeptide: MTEITQLFQYNTLGALMAGLYEGTMTIGELLKHGDLGIGTLDSVDGELIVLDGKAYQAKGDKTIVELTDDIKVPYAAVVPHQAEVVFKQKFTASDKELEDRIESYFDGQNLFRSIKITGEFPKMHVRMIPRAKSGTRFVEVSQNQPEYTEENVKGTIVGIWTPEMFHGVSVAGYHLHFISEDFTFGGHVLDFIIDNGTVEIGAIDQLNQSFPVQDRKFLFADLDIEALKKDIDVAE.

The protein belongs to the alpha-acetolactate decarboxylase family.

The catalysed reaction is (2S)-2-acetolactate + H(+) = (R)-acetoin + CO2. The protein operates within polyol metabolism; (R,R)-butane-2,3-diol biosynthesis; (R,R)-butane-2,3-diol from pyruvate: step 2/3. Converts acetolactate into acetoin. This Lactococcus lactis subsp. lactis (strain IL1403) (Streptococcus lactis) protein is Alpha-acetolactate decarboxylase (aldB).